Consider the following 272-residue polypeptide: Shikimate dehydrogenase (NADP(+)) (272 aa).

Residues 14-16 and threonine 61 each bind shikimate; that span reads SKS. Residue lysine 65 is the Proton acceptor of the active site. Residue glutamate 77 coordinates NADP(+). Residues asparagine 86 and aspartate 102 each coordinate shikimate. Residues 126–130, 149–154, and methionine 213 contribute to the NADP(+) site; these read GAGGA and NRTASR. Position 215 (tyrosine 215) interacts with shikimate. Glycine 237 contacts NADP(+).

This sequence belongs to the shikimate dehydrogenase family. In terms of assembly, homodimer.

It carries out the reaction shikimate + NADP(+) = 3-dehydroshikimate + NADPH + H(+). It participates in metabolic intermediate biosynthesis; chorismate biosynthesis; chorismate from D-erythrose 4-phosphate and phosphoenolpyruvate: step 4/7. Functionally, involved in the biosynthesis of the chorismate, which leads to the biosynthesis of aromatic amino acids. Catalyzes the reversible NADPH linked reduction of 3-dehydroshikimate (DHSA) to yield shikimate (SA). The sequence is that of Shikimate dehydrogenase (NADP(+)) from Salmonella schwarzengrund (strain CVM19633).